Here is a 246-residue protein sequence, read N- to C-terminus: Phycobilisome rod-core linker polypeptide CpcG2 (246 aa).

A PBS-linker domain is found at 11-189 (SSQNQRVAGY…YWRDKLENSR (179 aa)). Positions 224–246 (DTTRRDRPTVPASINPTASFPLR) are disordered. Residues 235 to 246 (ASINPTASFPLR) show a composition bias toward polar residues.

This sequence belongs to the phycobilisome linker protein family. The phycobilisome is a hemidiscoidal structure that is composed of two distinct substructures: a core complex and a number of rods radiating from the core.

Its subcellular location is the cellular thylakoid membrane. Rod-core linker protein required for attachment of phycocyanin to allophycocyanin in cores of phycobilisomes. Functionally, linker polypeptides determine the state of aggregation and the location of the disk-shaped phycobiliprotein units within the phycobilisome and modulate their spectroscopic properties in order to mediate a directed and optimal energy transfer. The polypeptide is Phycobilisome rod-core linker polypeptide CpcG2 (cpcG2) (Thermosynechococcus vestitus (strain NIES-2133 / IAM M-273 / BP-1)).